The sequence spans 1243 residues: Serine/threonine-protein kinase WNK4 (1243 aa).

The segment covering 1-17 (MLASPATETTVLMSQTE) has biased composition (polar residues). The tract at residues 1-142 (MLASPATETT…GPGSREPLRV (142 aa)) is disordered. Residues 65–77 (VDLGLLSSWSLPA) show a composition bias toward low complexity. Pro residues predominate over residues 78-103 (SPAPDPPDPPDSAGPGPARSPPPSSK). Serine 97 is subject to Phosphoserine. Basic and acidic residues predominate over residues 118–127 (AAEDSARPEL). Glycyl lysine isopeptide (Lys-Gly) (interchain with G-Cter in ubiquitin) cross-links involve residues lysine 157 and lysine 175. The region spanning 174–432 (LKFDIEIGRG…IQDLLAHAFF (259 aa)) is the Protein kinase domain. Serine 184 lines the ATP pocket. Glycyl lysine isopeptide (Lys-Gly) (interchain with G-Cter in ubiquitin) cross-links involve residues lysine 186, lysine 226, and lysine 241. Residues 254 to 257 (TELM) and lysine 304 contribute to the ATP site. The active-site Proton acceptor is the aspartate 321. A Glycyl lysine isopeptide (Lys-Gly) (interchain with G-Cter in ubiquitin) cross-link involves residue lysine 328. Phosphoserine; by autocatalysis is present on residues serine 331 and serine 335. Glycyl lysine isopeptide (Lys-Gly) (interchain with G-Cter in ubiquitin) cross-links involve residues lysine 387, lysine 393, lysine 450, and lysine 454. The disordered stretch occupies residues 526–564 (KARELEALPPEPGPPPATVPMAPGPPSVFPPEPEEPEAD). The span at 534 to 556 (PPEPGPPPATVPMAPGPPSVFPP) shows a compositional bias: pro residues. Residues 557–567 (EPEEPEADQHQ) form an interaction with KLHL3 region. Residue serine 575 is modified to Phosphoserine. Over residues 630–641 (SGPGSDFSPGDS) the composition is skewed to low complexity. Disordered stretches follow at residues 630-683 (SGPG…SVSD), 751-871 (DTGP…STPE), and 943-1110 (SPSP…SPVW). Positions 663–676 (PPGRNLRRRPRSRL) are enriched in basic residues. Residues 767-780 (EPAPLPALPVPLPD) show a composition bias toward pro residues. Residues 797–812 (WTAFSTSSSSPGTPLS) are compositionally biased toward low complexity. Positions 822–843 (PISPGPIFPITSPPCHPSPSPF) are enriched in pro residues. 3 stretches are compositionally biased toward low complexity: residues 844-854 (SPISSQVSSNP), 862-871 (PLPFSSSTPE), and 943-952 (SPSPGLLSQS). The segment covering 953-970 (PPAPPSPLPSLPLPPPVA) has biased composition (pro residues). A Glycyl lysine isopeptide (Lys-Gly) (interchain with G-Cter in ubiquitin) cross-link involves residue lysine 1010. The RFXV motif motif lies at 1016–1019 (RFQV). Serine 1035 carries the phosphoserine modification. Residues 1065-1077 (ETREALAESDRAA) are compositionally biased toward basic and acidic residues. Glycyl lysine isopeptide (Lys-Gly) (interchain with G-Cter in ubiquitin) cross-links involve residues lysine 1144, lysine 1157, and lysine 1158. A disordered region spans residues 1166–1243 (RLGKQPPPGI…VTFAGDVGRM (78 aa)). Composition is skewed to polar residues over residues 1193 to 1204 (SFPTSRRNSLQR) and 1216 to 1228 (NSLSGSSTGSQEQ). Serine 1217 is subject to Phosphoserine.

Belongs to the protein kinase superfamily. Ser/Thr protein kinase family. WNK subfamily. In terms of assembly, interacts with the C-terminal region of KCNJ1. The cofactor is Mg(2+). In terms of processing, autophosphorylated at Ser-331 and Ser-335, promoting its activation. Phosphorylated by WNK1 and WNK3. Phosphorylated at Ser-575 in a MAP3K15/ASK3-dependent process in response to osmotic stress or hypotonic low-chloride stimulation. Post-translationally, ubiquitinated by the BCR(KLHL3) complex, leading to its degradation. Also ubiquitinated by the BCR(KLHL2) complex. Expressed in kidney, colon and skin.

Its subcellular location is the cell junction. It is found in the tight junction. It carries out the reaction L-seryl-[protein] + ATP = O-phospho-L-seryl-[protein] + ADP + H(+). It catalyses the reaction L-threonyl-[protein] + ATP = O-phospho-L-threonyl-[protein] + ADP + H(+). Its activity is regulated as follows. Activation requires autophosphorylation of Ser-331 and Ser-335. Autophosphorylation and subsequent activation is inhibited by increases in intracellular ionic strength: Cl(-) potently inhibits WNK4 kinase activity via direct binding. Also inhibited by K(+) ions. Functionally, serine/threonine-protein kinase component of the WNK4-SPAK/OSR1 kinase cascade, which acts as a key regulator of ion transport in the distal nephron and blood pressure. The WNK4-SPAK/OSR1 kinase cascade is composed of WNK4, which mediates phosphorylation and activation of downstream kinases OXSR1/OSR1 and STK39/SPAK. Following activation, OXSR1/OSR1 and STK39/SPAK catalyze phosphorylation of ion cotransporters, such as SLC12A1/NKCC2, SLC12A2/NKCC1, SLC12A3/NCC, SLC12A5/KCC2 or SLC12A6/KCC3, regulating their activity. Acts as a molecular switch that regulates the balance between renal salt reabsorption and K(+) secretion by modulating the activities of renal transporters and channels, including the Na-Cl cotransporter SLC12A3/NCC and the K(+) channel, KCNJ1/ROMK. Regulates NaCl reabsorption in the distal nephron by activating the thiazide-sensitive Na-Cl cotransporter SLC12A3/NCC in distal convoluted tubule cells of kidney: activates SLC12A3/NCC in a OXSR1/OSR1- and STK39/SPAK-dependent process. Also acts as a scaffold protein independently of its protein kinase activity: negatively regulates cell membrane localization of various transporters and channels (CFTR, KCNJ1/ROMK, SLC4A4, SLC26A9 and TRPV4) by clathrin-dependent endocytosis. Also inhibits the activity of the epithelial Na(+) channel (ENaC) SCNN1A, SCNN1B, SCNN1D in a inase-independent mechanism. May also phosphorylate NEDD4L. The sequence is that of Serine/threonine-protein kinase WNK4 from Homo sapiens (Human).